The primary structure comprises 294 residues: Ferredoxin--NADP reductase (294 aa).

The FAD-binding FR-type domain maps to 13–137 (KNPYIGKCLS…TGPVGKEMLL (125 aa)). Residues 72–75 (RLYS), 93–95 (CVR), Y99, 111–113 (VCS), and T152 contribute to the FAD site. NADP(+) contacts are provided by S75 and R95. NADP(+) is bound by residues T152, 184–185 (IP), 214–215 (SR), K224, 224–228 (KMYIQ), 253–254 (GL), and E292.

The protein belongs to the ferredoxin--NADP reductase type 1 family. Requires FAD as cofactor.

It is found in the cellular thylakoid membrane. It catalyses the reaction 2 reduced [2Fe-2S]-[ferredoxin] + NADP(+) + H(+) = 2 oxidized [2Fe-2S]-[ferredoxin] + NADPH. The protein is Ferredoxin--NADP reductase (petH) of Spirulina sp.